A 309-amino-acid chain; its full sequence is tRNA-cytidine(32) 2-sulfurtransferase (309 aa).

A PP-loop motif motif is present at residues 57–62 (SGGKDS). Residues Cys132, Cys135, and Cys223 each coordinate [4Fe-4S] cluster.

Belongs to the TtcA family. Homodimer. Mg(2+) is required as a cofactor. Requires [4Fe-4S] cluster as cofactor.

The protein resides in the cytoplasm. It carries out the reaction cytidine(32) in tRNA + S-sulfanyl-L-cysteinyl-[cysteine desulfurase] + AH2 + ATP = 2-thiocytidine(32) in tRNA + L-cysteinyl-[cysteine desulfurase] + A + AMP + diphosphate + H(+). Its pathway is tRNA modification. Its function is as follows. Catalyzes the ATP-dependent 2-thiolation of cytidine in position 32 of tRNA, to form 2-thiocytidine (s(2)C32). The sulfur atoms are provided by the cysteine/cysteine desulfurase (IscS) system. In Variovorax paradoxus (strain S110), this protein is tRNA-cytidine(32) 2-sulfurtransferase.